A 64-amino-acid polypeptide reads, in one-letter code: U-myrmeciitoxin(01)-Mg4b (64 aa).

A signal peptide spans 1–25 (MGKIFFFVLMIAIIGSTFLIEEALG).

This sequence belongs to the ant myrmeciitoxin-01 family. As to quaternary structure, homodimer; disulfide-linked. Contains 2 intrachain disulfide bonds (per chain) and 1 interchain disulfide bond. Expressed by the venom gland.

It localises to the secreted. In terms of biological role, may have antimicrobial properties, like most ant linear peptides. This chain is U-myrmeciitoxin(01)-Mg4b, found in Myrmecia gulosa (Red bulldog ant).